Here is a 367-residue protein sequence, read N- to C-terminus: Pectate lyase 1 (367 aa).

The signal sequence occupies residues 1–21 (MASPCLVAVLVFLCAIVSCYS). 2 disulfide bridges follow: C28/C45 and C128/C147. N-linked (GlcNAc...) asparagine glycosylation is present at N148. D170 provides a ligand contact to Ca(2+). N-linked (GlcNAc...) asparagine glycosylation is present at N178. D194 and D198 together coordinate Ca(2+). R250 is a catalytic residue. Residue N293 is glycosylated (N-linked (GlcNAc...) asparagine). C306 and C312 form a disulfide bridge.

This sequence belongs to the polysaccharide lyase 1 family. Amb a subfamily. Ca(2+) is required as a cofactor.

It catalyses the reaction Eliminative cleavage of (1-&gt;4)-alpha-D-galacturonan to give oligosaccharides with 4-deoxy-alpha-D-galact-4-enuronosyl groups at their non-reducing ends.. The protein operates within glycan metabolism; pectin degradation; 2-dehydro-3-deoxy-D-gluconate from pectin: step 2/5. Its function is as follows. Has pectate lyase activity. The sequence is that of Pectate lyase 1 from Hesperocyparis arizonica (Arizona cypress).